The sequence spans 320 residues: MSTITAADVNKLRQSTGAGMMDCKKALVEAEGDFDKAIQILREKGQKVAANRSDRESSEGAAVSFINADNTKGAIITLNCETDFVGKNEAFVTLAKDLVERAINFSNKEEFLASDFNGITVAEKLIEQTGVIGEKIEIGGFEILEGAFVGSYVHVNKIAALTAISAPIANAETLTKDVSMQVASMGADTLSYKDFDPAFVESELAARIAVIEKDNEEAKRLGKTLKNVPKYISFSQLTPEVIKQAEEDAKAELKAEGKPEQIWDKILPGKVQRFISDNTTLDQEKALLDQNFIKDDSKKVGDYVKGFNVEITGFKRVTLG.

The tract at residues 82-85 is involved in Mg(2+) ion dislocation from EF-Tu; that stretch reads TDFV.

The protein belongs to the EF-Ts family.

It localises to the cytoplasm. Functionally, associates with the EF-Tu.GDP complex and induces the exchange of GDP to GTP. It remains bound to the aminoacyl-tRNA.EF-Tu.GTP complex up to the GTP hydrolysis stage on the ribosome. The chain is Elongation factor Ts from Flavobacterium johnsoniae (strain ATCC 17061 / DSM 2064 / JCM 8514 / BCRC 14874 / CCUG 350202 / NBRC 14942 / NCIMB 11054 / UW101) (Cytophaga johnsonae).